We begin with the raw amino-acid sequence, 81 residues long: MKTLLLTLVVVTIVCLDLGYTMTCCNQQSSQPKTTTPCAESSCYKKTWKDNRGTIIERGCGCPNVKPGIDLMCCKTDECNN.

Positions 1–21 are cleaved as a signal peptide; the sequence is MKTLLLTLVVVTIVCLDLGYT. 4 disulfide bridges follow: Cys24-Cys43, Cys38-Cys60, Cys62-Cys73, and Cys74-Cys79.

The protein belongs to the three-finger toxin family. Short-chain subfamily. Type I alpha-neurotoxin sub-subfamily. As to expression, expressed by the venom gland.

It localises to the secreted. In terms of biological role, binds to muscle nicotinic acetylcholine receptor (nAChR) and inhibit acetylcholine from binding to the receptor, thereby impairing neuromuscular transmission. In Tropidechis carinatus (Australian rough-scaled snake), this protein is Short neurotoxin 1.